Reading from the N-terminus, the 305-residue chain is Oligopeptide transport system permease protein OppC (305 aa).

6 helical membrane passes run 43–63 (AMVGLIIIVLIILMAIFAPMF), 105–125 (ISIFIGVAAAVLDLLIGVIWG), 166–185 (LFTIIIAMTITGWINMARIV), 212–232 (LFKHIVPNAMGSILVTMTLTV), 236–256 (IFTEAFLSYLGLGVPAPLASW), and 274–294 (LFFPAGFICITMFGFNVVGDG). The region spanning 103 to 292 (ARISIFIGVA…ITMFGFNVVG (190 aa)) is the ABC transmembrane type-1 domain.

It belongs to the binding-protein-dependent transport system permease family. OppBC subfamily. In terms of assembly, the complex is composed of two ATP-binding proteins (OppD and OppF), two transmembrane proteins (OppB and OppC) and a solute-binding protein (OppA).

It is found in the cell membrane. In terms of biological role, part of the ABC transporter complex OppABCDF involved in the uptake of oligopeptides. Probably responsible for the translocation of the substrate across the membrane. Required for sporulation and genetic competence. The chain is Oligopeptide transport system permease protein OppC from Bacillus subtilis (strain 168).